A 474-amino-acid chain; its full sequence is Probable aspartate--tRNA ligase, cytoplasmic (474 aa).

An L-aspartate-binding site is contributed by E203. The aspartate stretch occupies residues 225–228; the sequence is QLYK. Residue R247 participates in L-aspartate binding. Residues 247–249, 255–257, and E397 each bind ATP; these read RAE and RYL. L-aspartate is bound by residues S400 and R404. An ATP-binding site is contributed by 445 to 448; that stretch reads GLER.

Belongs to the class-II aminoacyl-tRNA synthetase family. Type 2 subfamily. In terms of assembly, homodimer.

The protein localises to the cytoplasm. The catalysed reaction is tRNA(Asp) + L-aspartate + ATP = L-aspartyl-tRNA(Asp) + AMP + diphosphate. This is Probable aspartate--tRNA ligase, cytoplasmic from Enterocytozoon bieneusi (strain H348) (Microsporidian parasite).